Here is a 549-residue protein sequence, read N- to C-terminus: Cytoplasmic trehalase (549 aa).

Substrate contacts are provided by residues Arg168, 175-176 (WD), Asn212, 221-223 (RSQ), 292-294 (RDE), and Gly324. Active-site proton donor/acceptor residues include Asp326 and Glu509. Glu525 is a substrate binding site.

Belongs to the glycosyl hydrolase 37 family. Monomer.

It is found in the cytoplasm. It carries out the reaction alpha,alpha-trehalose + H2O = alpha-D-glucose + beta-D-glucose. Its pathway is glycan degradation; trehalose degradation; D-glucose from alpha,alpha-trehalose: step 1/1. Its function is as follows. Hydrolyzes trehalose to glucose. Could be involved, in cells returning to low osmolarity conditions, in the utilization of the accumulated cytoplasmic trehalose, which was synthesized in response to high osmolarity. The chain is Cytoplasmic trehalase from Escherichia coli O139:H28 (strain E24377A / ETEC).